Reading from the N-terminus, the 274-residue chain is NH(3)-dependent NAD(+) synthetase (274 aa).

ATP is bound at residue 46–53 (GISGGQDS). D52 serves as a coordination point for Mg(2+). R140 lines the deamido-NAD(+) pocket. ATP is bound at residue T160. A Mg(2+)-binding site is contributed by E165. Positions 173 and 180 each coordinate deamido-NAD(+). ATP-binding residues include K189 and T211. Residue 260-261 (HK) participates in deamido-NAD(+) binding.

The protein belongs to the NAD synthetase family. As to quaternary structure, homodimer.

It catalyses the reaction deamido-NAD(+) + NH4(+) + ATP = AMP + diphosphate + NAD(+) + H(+). It participates in cofactor biosynthesis; NAD(+) biosynthesis; NAD(+) from deamido-NAD(+) (ammonia route): step 1/1. In terms of biological role, catalyzes the ATP-dependent amidation of deamido-NAD to form NAD. Uses ammonia as a nitrogen source. The chain is NH(3)-dependent NAD(+) synthetase from Listeria monocytogenes serovar 1/2a (strain ATCC BAA-679 / EGD-e).